Here is a 237-residue protein sequence, read N- to C-terminus: Ribonuclease 3 (237 aa).

Residues 8–134 (RSALLEKLGV…VIGAVYLDAG (127 aa)) enclose the RNase III domain. Mg(2+) is bound at residue Glu47. The active site involves Asp51. Asp120 and Glu123 together coordinate Mg(2+). Glu123 is an active-site residue. The region spanning 161-229 (DPKTSLQEAA…ALSAWTALTN (69 aa)) is the DRBM domain.

Belongs to the ribonuclease III family. As to quaternary structure, homodimer. It depends on Mg(2+) as a cofactor.

Its subcellular location is the cytoplasm. The enzyme catalyses Endonucleolytic cleavage to 5'-phosphomonoester.. Its function is as follows. Digests double-stranded RNA. Involved in the processing of primary rRNA transcript to yield the immediate precursors to the large and small rRNAs (23S and 16S). Processes some mRNAs, and tRNAs when they are encoded in the rRNA operon. Processes pre-crRNA and tracrRNA of type II CRISPR loci if present in the organism. The sequence is that of Ribonuclease 3 from Leifsonia xyli subsp. xyli (strain CTCB07).